The sequence spans 405 residues: Glucose-1-phosphate adenylyltransferase 1 (405 aa).

Residues Tyr-96, Gly-161, 176–177 (EK), and Ser-194 contribute to the alpha-D-glucose 1-phosphate site.

It belongs to the bacterial/plant glucose-1-phosphate adenylyltransferase family. In terms of assembly, homotetramer.

The catalysed reaction is alpha-D-glucose 1-phosphate + ATP + H(+) = ADP-alpha-D-glucose + diphosphate. The protein operates within glycan biosynthesis; glycogen biosynthesis. Its function is as follows. Involved in the biosynthesis of ADP-glucose, a building block required for the elongation reactions to produce glycogen. Catalyzes the reaction between ATP and alpha-D-glucose 1-phosphate (G1P) to produce pyrophosphate and ADP-Glc. This is Glucose-1-phosphate adenylyltransferase 1 from Vibrio cholerae serotype O1 (strain ATCC 39315 / El Tor Inaba N16961).